Here is a 348-residue protein sequence, read N- to C-terminus: Tetraacyldisaccharide 4'-kinase (348 aa).

54-61 lines the ATP pocket; sequence TVGGAGKT.

It belongs to the LpxK family.

The catalysed reaction is a lipid A disaccharide + ATP = a lipid IVA + ADP + H(+). The protein operates within glycolipid biosynthesis; lipid IV(A) biosynthesis; lipid IV(A) from (3R)-3-hydroxytetradecanoyl-[acyl-carrier-protein] and UDP-N-acetyl-alpha-D-glucosamine: step 6/6. Its function is as follows. Transfers the gamma-phosphate of ATP to the 4'-position of a tetraacyldisaccharide 1-phosphate intermediate (termed DS-1-P) to form tetraacyldisaccharide 1,4'-bis-phosphate (lipid IVA). This is Tetraacyldisaccharide 4'-kinase from Agrobacterium fabrum (strain C58 / ATCC 33970) (Agrobacterium tumefaciens (strain C58)).